The following is an 88-amino-acid chain: Gene 86 protein (88 aa).

Residues 64-88 are disordered; the sequence is WRGNPSAYDDEVGDLEGFETQHSDY. Positions 71–80 are enriched in acidic residues; the sequence is YDDEVGDLEG.

In Mycobacterium (Mycobacteriophage L5), this protein is Gene 86 protein (86).